The following is a 108-amino-acid chain: Putative double-stranded DNA mimic protein PBPRA1522 (108 aa).

The protein belongs to the putative dsDNA mimic protein family.

Functionally, may act as a double-stranded DNA (dsDNA) mimic. Probably regulates the activity of a dsDNA-binding protein. The sequence is that of Putative double-stranded DNA mimic protein PBPRA1522 from Photobacterium profundum (strain SS9).